A 508-amino-acid polypeptide reads, in one-letter code: Histone acetyltransferase type B catalytic subunit (508 aa).

Interaction with histone H4 N-terminus stretches follow at residues 44–46 (EKE) and 207–209 (YRY). Acetyl-CoA contacts are provided by residues 249 to 251 (FII) and 256 to 262 (QQKGLGS). The Proton donor/acceptor role is filled by Glu284. Disordered stretches follow at residues 364–399 (SVRP…PTPE) and 461–508 (QADG…SGHA). Residues 387 to 399 (KGHEKALPKPTPE) are compositionally biased toward basic and acidic residues.

Belongs to the HAT1 family. As to quaternary structure, component of the HAT-B complex composed of at least hat-1 and hat-2. The HAT-B complex binds to histone H4 tail.

The protein localises to the cytoplasm. It localises to the nucleus. It carries out the reaction L-lysyl-[protein] + acetyl-CoA = N(6)-acetyl-L-lysyl-[protein] + CoA + H(+). In terms of biological role, catalytic component of the histone acetylase B (HAT-B) complex. Acetylates 'Lys-12' of histone H4 which is required for telomeric silencing. Has intrinsic substrate specificity that modifies lysine in recognition sequence GXGKXG. Involved in DNA double-strand break repair. This is Histone acetyltransferase type B catalytic subunit (hat-1) from Neurospora crassa (strain ATCC 24698 / 74-OR23-1A / CBS 708.71 / DSM 1257 / FGSC 987).